A 403-amino-acid chain; its full sequence is Major capsid protein (403 aa).

It localises to the virion. Its function is as follows. Assembles to form an icosahedral capsid. In Staphylococcus phage S24-1, this protein is Major capsid protein.